The sequence spans 500 residues: Probable lipoprotein aminopeptidase LpqL (500 aa).

The N-terminal stretch at 1–24 is a signal peptide; the sequence is MVNKSRMMPAVLAVAVVVAFLTTG. Cysteine 25 carries the N-palmitoyl cysteine lipid modification. Residue cysteine 25 is the site of S-diacylglycerol cysteine attachment. The PA domain occupies 140 to 231; sequence VTGPLVAAPA…VTKSVGFQLR (92 aa). The Zn(2+) site is built by histidine 271 and aspartate 283. Glutamate 316 functions as the Proton acceptor in the catalytic mechanism. Zn(2+) is bound by residues glutamate 317, aspartate 345, and histidine 448.

It belongs to the peptidase M28 family. M28A subfamily. Requires Zn(2+) as cofactor. In terms of processing, modified by Lgt on Cys-25 with an S-linked diacylglycerol with a mixture of C16 and C19 fatty acids (palmitic and tuberculostearic acid), signal peptide is removed by LspA, modified by Lnt with an amide-linked mixture of C16 and C19 fatty acids, expressed in M.bovis.

The protein resides in the cell membrane. The catalysed reaction is Release of an N-terminal amino acid, Xaa-|-Yaa-, in which Xaa is preferably Leu, but may be other amino acids including Pro although not Arg or Lys, and Yaa may be Pro. Amino acid amides and methyl esters are also readily hydrolyzed, but rates on arylamides are exceedingly low.. In terms of biological role, an aminopeptidase; acts on free N-terminal amino groups with a very strong preference for Leu in the first position. The chain is Probable lipoprotein aminopeptidase LpqL (lpqL) from Mycobacterium tuberculosis (strain ATCC 25618 / H37Rv).